We begin with the raw amino-acid sequence, 525 residues long: Ubiquitin carboxyl-terminal hydrolase 22 (525 aa).

A UBP-type zinc finger spans residues 21–138 (PGCSHLGSFK…KEEQRKAWKM (118 aa)). Residues cysteine 23, histidine 25, cysteine 63, cysteine 66, cysteine 76, cysteine 79, cysteine 84, histidine 89, histidine 93, histidine 99, cysteine 112, and cysteine 115 each contribute to the Zn(2+) site. The residue at position 129 (lysine 129) is an N6-acetyllysine. Threonine 147 is modified (phosphothreonine; by CDK1). The 345-residue stretch at 176–520 (RGLINLGNTC…EGYLLFYHKQ (345 aa)) folds into the USP domain. The active-site Nucleophile is cysteine 185. Serine 237 is modified (phosphoserine; by CDK1). The Proton acceptor role is filled by histidine 479.

This sequence belongs to the peptidase C19 family. UBP8 subfamily. Component of some SAGA transcription coactivator-HAT complexes, at least composed of ATXN7, ATXN7L3, ENY2, GCN5L2, SUPT3H, TAF10, TRRAP and USP22. Within the SAGA complex, ATXN7L3, ENY2 and USP22 form a subcomplex required for histone deubiquitination. Interacts directly with ATXN7L3; leading to its recruitment to the SAGA complex. Interacts with ATXN7L3 and weakly with ATXN7L3B. Interacts with MED1. In terms of processing, phosphorylated in G2/M phase, but not in G1 phase by CDK1. Post-translationally, ubiquitinated and subsequently degraded in a CDC20-dependent manner. As to expression, moderately expressed in various tissues including heart and skeletal muscle, and weakly expressed in lung and liver.

Its subcellular location is the nucleus. The protein localises to the cytoplasm. The enzyme catalyses Thiol-dependent hydrolysis of ester, thioester, amide, peptide and isopeptide bonds formed by the C-terminal Gly of ubiquitin (a 76-residue protein attached to proteins as an intracellular targeting signal).. Functionally, deubiquitinase that plays a role in several cellular processes including transcriptional regulation, cell cycle progression or innate immunity. As part of the transcription regulatory histone acetylation (HAT) complex SAGA, catalyzes the deubiquitination of both histones H2A and H2B, thereby acting as a transcriptional coactivator. Recruited to specific gene promoters by activators such as MYC, where it is required for transcription. Facilitates cell-cycle progression by stabilizing CCNB1 and antagonizing its proteasome-mediated degradation in a cell cycle-specific manner. Modulates cell cycle progression and apoptosis also by antagonizing TP53 transcriptional activation through deacetylase SIRT1 stabilization. Plays multiple roles in immunity and inflammation. Participates in antiviral response by deubiquitinating the importin KPNA2, leading to IRF3 nuclear translocation and subsequent type I interferon production. Acts as a central regulator of type III IFN signaling by negatively regulating STING1 activation and ubiquitination. Inhibits NLRP3 inflammasome activation by promoting NLRP3 degradation through ATG5-dependent autophagy. Deubiquitinates CD274 to induce its stabilization and thereby participates in maintenance of immune tolerance to self. Controls necroptotic cell death by regulating RIPK3 phosphorylation and ubiquitination. During bacterial infection, promotes pro-inflammatory response by targeting TRAF6 and removing its 'Lys-48'-linked polyubiquitination. The polypeptide is Ubiquitin carboxyl-terminal hydrolase 22 (USP22) (Homo sapiens (Human)).